A 565-amino-acid chain; its full sequence is METITKKARSLYIPYAGPVLLEFPLLNKGSAFSVEERRNFNLSGLLPEVVESIEEQAERAWLQYQGFKTEIDKHIYLRNIQDTNETLFYRLVQNHLEEMMPVIYTPTVGAACERFSEIYRRARGVFISYPNRHNMDDILQNVPNHNIKVIVVTDGERILGLGDQGIGGMGIPIGKLSLYTACGGISPAYTLPVVLDVGTNNQQLLNDPLYMGWRHPRITDDEYYAFVDEFIQAVKQRWPDILLQFEDFAQKNAMPLLTRYRDEICSFNDDIQGTAAVTVGTLIAASRAAGSQLSEQKIVFLGAGSAGCGIAEQIIAQTQREGLSEDAARQNVFMVDRFGLLTDRMPNLLPFQAKLVQKCDNLQHWDTENDVLSLLDVVRNVKPDILIGVSGQTGLFTEEIIREMHKHCPRPIVMPLSNPTSRVEATPQDIIAWTEGNALVATGSPFSPVIWKDKIYPIAQCNNAYIFPGIGLGVIASGASRITDEMLMSASETLAKHSPLVNNGEGLVLPALKDIQVVSRAIAFAVGKMAQQQGVAVKTSAEALQQAIDDNFWKPEYRDYRRTSI.

The active-site Proton donor is Tyr-104. Arg-157 serves as a coordination point for NAD(+). The active-site Proton acceptor is Lys-175. Residues Glu-246, Asp-247, and Asp-270 each coordinate a divalent metal cation. Residues Asp-270 and Asn-418 each coordinate NAD(+).

Belongs to the malic enzymes family. Homotetramer. The cofactor is Mg(2+). Mn(2+) serves as cofactor.

The catalysed reaction is (S)-malate + NAD(+) = pyruvate + CO2 + NADH. The enzyme catalyses oxaloacetate + H(+) = pyruvate + CO2. The sequence is that of NAD-dependent malic enzyme from Salmonella dublin (strain CT_02021853).